The following is a 398-amino-acid chain: Bone morphogenetic protein 2-A (398 aa).

Positions 1–23 are cleaved as a signal peptide; sequence MVAGIHSLLLLLFYQVLLSGCTG. Positions 24–284 are excised as a propeptide; it reads LIPEEGKRKY…GHALHKRQKR (261 aa). Residues Asn137, Asn202, and Asn340 are each glycosylated (N-linked (GlcNAc...) asparagine). 3 cysteine pairs are disulfide-bonded: Cys298-Cys363, Cys327-Cys395, and Cys331-Cys397.

This sequence belongs to the TGF-beta family. In terms of assembly, homodimer; disulfide-linked.

The protein localises to the secreted. Its function is as follows. Induces cartilage and bone formation. The sequence is that of Bone morphogenetic protein 2-A (bmp2-a) from Xenopus laevis (African clawed frog).